The sequence spans 55 residues: Large ribosomal subunit protein bL33A (55 aa).

Belongs to the bacterial ribosomal protein bL33 family.

In Mycobacterium sp. (strain JLS), this protein is Large ribosomal subunit protein bL33A.